The chain runs to 241 residues: Triosephosphate isomerase (241 aa).

9–11 (NWK) lines the substrate pocket. Catalysis depends on His96, which acts as the Electrophile. Glu165 (proton acceptor) is an active-site residue. Substrate is bound by residues Gly171, Ser204, and 225 to 226 (GG).

This sequence belongs to the triosephosphate isomerase family. Homodimer.

Its subcellular location is the cytoplasm. The catalysed reaction is D-glyceraldehyde 3-phosphate = dihydroxyacetone phosphate. Its pathway is carbohydrate biosynthesis; gluconeogenesis. The protein operates within carbohydrate degradation; glycolysis; D-glyceraldehyde 3-phosphate from glycerone phosphate: step 1/1. Its function is as follows. Involved in the gluconeogenesis. Catalyzes stereospecifically the conversion of dihydroxyacetone phosphate (DHAP) to D-glyceraldehyde-3-phosphate (G3P). The polypeptide is Triosephosphate isomerase (Nostoc sp. (strain PCC 7120 / SAG 25.82 / UTEX 2576)).